The sequence spans 351 residues: MINNTEIRQNWTVAEVDQLFEMPFMDLVFQAQTTHRANFPLNEVQVSTLLSIKTGACPEDCKYCPQSARYNTGLAKEQLIEVAKVVKAAKEAKATGSTRFCMGAAWKNPKQRDMPYLLDMIKEVRALGLESCMTLGMLDNNQAEQLSNAGLDYYNHNLDTSPEYYDKIITTRTYQDRLDTLENVRNSGMKVCSGGIVGLGEAGSDRSGLLVQLANLPQQPESVPINKLVKVKGTPLENADDLDDFTFIKTIAIARLLMPKSHVRLSAGRDDMNEQTQALCFMAGANSIFYGCKLLTTANPDENSDTRLFEKLGINKEAINFSPSEAEKKVDAAIVRFNEKDELFFDATSKA.

Residues N42–R269 form the Radical SAM core domain. C57, C61, and C64 together coordinate [4Fe-4S] cluster. Residues C101, C132, C192, and R264 each contribute to the [2Fe-2S] cluster site.

This sequence belongs to the radical SAM superfamily. Biotin synthase family. In terms of assembly, homodimer. Requires [4Fe-4S] cluster as cofactor. [2Fe-2S] cluster serves as cofactor.

It carries out the reaction (4R,5S)-dethiobiotin + (sulfur carrier)-SH + 2 reduced [2Fe-2S]-[ferredoxin] + 2 S-adenosyl-L-methionine = (sulfur carrier)-H + biotin + 2 5'-deoxyadenosine + 2 L-methionine + 2 oxidized [2Fe-2S]-[ferredoxin]. It participates in cofactor biosynthesis; biotin biosynthesis; biotin from 7,8-diaminononanoate: step 2/2. Catalyzes the conversion of dethiobiotin (DTB) to biotin by the insertion of a sulfur atom into dethiobiotin via a radical-based mechanism. This is Biotin synthase from Psychromonas ingrahamii (strain DSM 17664 / CCUG 51855 / 37).